The primary structure comprises 321 residues: Gap junction delta-2 protein (321 aa).

The Cytoplasmic portion of the chain corresponds to 1–19; the sequence is MGEWTILERLLEAAVQQHS. The helical transmembrane segment at 20–42 threads the bilayer; sequence TMIGRILLTVVVIFRILIVAIVG. At 43–75 the chain is on the extracellular side; the sequence is ETVYDDEQTMFVCNTLQPGCNQACYDRAFPISH. A helical transmembrane segment spans residues 76–98; the sequence is IRYWVFQIIMVCTPSLCFITYSV. The Cytoplasmic portion of the chain corresponds to 99–197; that stretch reads HQSAKQRERR…KLRRQEGISR (99 aa). The segment at 120–141 is disordered; it reads PAESIGGPGGTGGGGSGGSKRE. The segment covering 125-137 has biased composition (gly residues); sequence GGPGGTGGGGSGG. A helical membrane pass occupies residues 198–220; that stretch reads FYIIQVVFRNALEIGFLVGQYFL. Topologically, residues 221–252 are extracellular; that stretch reads YGFSVPGLYECNRYPCIKEVECYVSRPTEKTV. The chain crosses the membrane as a helical span at residues 253 to 275; it reads FLVFMFAVSGICVVLNLAELNHL. The Cytoplasmic portion of the chain corresponds to 276–321; the sequence is GWRKIKLAVRGAQAKRKSVYEIRNKDLPRVSVPNFGRTQSSDSAYV.

Belongs to the connexin family. Delta-type subfamily. As to quaternary structure, a connexon is composed of a hexamer of connexins. In terms of tissue distribution, highly expressed in neurons.

It localises to the cell membrane. The protein resides in the cell junction. Its subcellular location is the gap junction. Functionally, one gap junction consists of a cluster of closely packed pairs of transmembrane channels, the connexons, through which materials of low MW diffuse from one cell to a neighboring cell. The protein is Gap junction delta-2 protein (Gjd2) of Mus musculus (Mouse).